Here is a 450-residue protein sequence, read N- to C-terminus: tRNA-2-methylthio-N(6)-dimethylallyladenosine synthase (450 aa).

Residues 8 to 124 (RTLHITTWGC…LPELIAEIEA (117 aa)) form the MTTase N-terminal domain. Residues Cys17, Cys52, Cys87, Cys162, Cys166, and Cys169 each coordinate [4Fe-4S] cluster. The Radical SAM core domain occupies 148–380 (ASQGPIAFLA…QAVLRDQQHA (233 aa)). Residues 383 to 445 (RAQVGRSFEV…PNSLMASLTQ (63 aa)) form the TRAM domain.

It belongs to the methylthiotransferase family. MiaB subfamily. As to quaternary structure, monomer. Requires [4Fe-4S] cluster as cofactor.

The protein resides in the cytoplasm. It carries out the reaction N(6)-dimethylallyladenosine(37) in tRNA + (sulfur carrier)-SH + AH2 + 2 S-adenosyl-L-methionine = 2-methylsulfanyl-N(6)-dimethylallyladenosine(37) in tRNA + (sulfur carrier)-H + 5'-deoxyadenosine + L-methionine + A + S-adenosyl-L-homocysteine + 2 H(+). Functionally, catalyzes the methylthiolation of N6-(dimethylallyl)adenosine (i(6)A), leading to the formation of 2-methylthio-N6-(dimethylallyl)adenosine (ms(2)i(6)A) at position 37 in tRNAs that read codons beginning with uridine. This is tRNA-2-methylthio-N(6)-dimethylallyladenosine synthase from Acidiphilium cryptum (strain JF-5).